The chain runs to 338 residues: Probable 1-aminocyclopropane-1-carboxylate deaminase (338 aa).

Position 51 is an N6-(pyridoxal phosphate)lysine (K51). The active-site Nucleophile is the S78.

The protein belongs to the ACC deaminase/D-cysteine desulfhydrase family. It depends on pyridoxal 5'-phosphate as a cofactor.

It catalyses the reaction 1-aminocyclopropane-1-carboxylate + H2O = 2-oxobutanoate + NH4(+). Catalyzes a cyclopropane ring-opening reaction, the irreversible conversion of 1-aminocyclopropane-1-carboxylate (ACC) to ammonia and alpha-ketobutyrate. In Schizosaccharomyces pombe (strain 972 / ATCC 24843) (Fission yeast), this protein is Probable 1-aminocyclopropane-1-carboxylate deaminase.